We begin with the raw amino-acid sequence, 476 residues long: MASYEAVIGLEVHAQLRTRSKLFCSCSTAFGADPNAHVCEVCAGMPGVLPVLNEKAVEFAARMGIAVGCTVNRTSVFARKNYFYPDLPKGYQISQYEQPICEHGHLDISVGDAVKRIGITRIHLEDDAGKNIHSAGENVSYVDLNRTGVPLIEIVSEPDLRSAEEAVAYLKALRAIVVHLGICDGNMEEGSFRCDANVSLRPRGAAEFGTRAELKNLNSFRHVQRAIEYEISRQADLLDDGDKVVQETRLYDSVKNITVSMRGKEEAHDYRYFPDPDLIPIHIDEARLAEWQATLPELPQARLERFMSSFGLSAQDAEVLTAERDHAEFFEAAVKLYDQPRKIANMMLGPLQRELNQRGTSLAVSAMRPEALAELVRIIDAGLISAKIGNDVFGELFENGAMPEAFVRERGLVQISDTSAIEQAVDEVIAENPAEVEAYRGGKTKLVSFFVGQVMRKTRGKANPALVNELLASKLG.

Belongs to the GatB/GatE family. GatB subfamily. Heterotrimer of A, B and C subunits.

The catalysed reaction is L-glutamyl-tRNA(Gln) + L-glutamine + ATP + H2O = L-glutaminyl-tRNA(Gln) + L-glutamate + ADP + phosphate + H(+). It catalyses the reaction L-aspartyl-tRNA(Asn) + L-glutamine + ATP + H2O = L-asparaginyl-tRNA(Asn) + L-glutamate + ADP + phosphate + 2 H(+). In terms of biological role, allows the formation of correctly charged Asn-tRNA(Asn) or Gln-tRNA(Gln) through the transamidation of misacylated Asp-tRNA(Asn) or Glu-tRNA(Gln) in organisms which lack either or both of asparaginyl-tRNA or glutaminyl-tRNA synthetases. The reaction takes place in the presence of glutamine and ATP through an activated phospho-Asp-tRNA(Asn) or phospho-Glu-tRNA(Gln). This Nitratidesulfovibrio vulgaris (strain ATCC 29579 / DSM 644 / CCUG 34227 / NCIMB 8303 / VKM B-1760 / Hildenborough) (Desulfovibrio vulgaris) protein is Aspartyl/glutamyl-tRNA(Asn/Gln) amidotransferase subunit B.